The primary structure comprises 254 residues: 5'-nucleotidase SurE (254 aa).

Aspartate 8, aspartate 9, serine 40, and asparagine 93 together coordinate a divalent metal cation.

This sequence belongs to the SurE nucleotidase family. A divalent metal cation serves as cofactor.

It localises to the cytoplasm. The catalysed reaction is a ribonucleoside 5'-phosphate + H2O = a ribonucleoside + phosphate. Functionally, nucleotidase that shows phosphatase activity on nucleoside 5'-monophosphates. The polypeptide is 5'-nucleotidase SurE (Actinobacillus pleuropneumoniae serotype 5b (strain L20)).